The chain runs to 506 residues: GMP synthase [glutamine-hydrolyzing] (506 aa).

In terms of domain architecture, Glutamine amidotransferase type-1 spans 2-190; the sequence is SIVILDFGSQ…FLDICGVTRD (189 aa). Residue cysteine 79 is the Nucleophile of the active site. Catalysis depends on residues histidine 165 and glutamate 167. A GMPS ATP-PPase domain is found at 191–381; sequence WNAEHIVDEL…LGLPDHIRMR (191 aa). Residue 219-225 coordinates ATP; that stretch reads SGGVDSS.

Homodimer.

It catalyses the reaction XMP + L-glutamine + ATP + H2O = GMP + L-glutamate + AMP + diphosphate + 2 H(+). It functions in the pathway purine metabolism; GMP biosynthesis; GMP from XMP (L-Gln route): step 1/1. In terms of biological role, catalyzes the synthesis of GMP from XMP. This chain is GMP synthase [glutamine-hydrolyzing] (guaA), found in Deinococcus radiodurans (strain ATCC 13939 / DSM 20539 / JCM 16871 / CCUG 27074 / LMG 4051 / NBRC 15346 / NCIMB 9279 / VKM B-1422 / R1).